Here is a 417-residue protein sequence, read N- to C-terminus: Serine hydroxymethyltransferase (417 aa).

(6S)-5,6,7,8-tetrahydrofolate contacts are provided by residues Leu-121 and Gly-125–Leu-127. An N6-(pyridoxal phosphate)lysine modification is found at Lys-229. Ser-355–Phe-357 serves as a coordination point for (6S)-5,6,7,8-tetrahydrofolate.

It belongs to the SHMT family. As to quaternary structure, homodimer. It depends on pyridoxal 5'-phosphate as a cofactor.

It is found in the cytoplasm. The catalysed reaction is (6R)-5,10-methylene-5,6,7,8-tetrahydrofolate + glycine + H2O = (6S)-5,6,7,8-tetrahydrofolate + L-serine. It participates in one-carbon metabolism; tetrahydrofolate interconversion. The protein operates within amino-acid biosynthesis; glycine biosynthesis; glycine from L-serine: step 1/1. Functionally, catalyzes the reversible interconversion of serine and glycine with tetrahydrofolate (THF) serving as the one-carbon carrier. This reaction serves as the major source of one-carbon groups required for the biosynthesis of purines, thymidylate, methionine, and other important biomolecules. Also exhibits THF-independent aldolase activity toward beta-hydroxyamino acids, producing glycine and aldehydes, via a retro-aldol mechanism. This Shewanella baltica (strain OS155 / ATCC BAA-1091) protein is Serine hydroxymethyltransferase.